Consider the following 239-residue polypeptide: Probable transcriptional regulatory protein ABO_1803 (239 aa).

Belongs to the TACO1 family.

The protein resides in the cytoplasm. The protein is Probable transcriptional regulatory protein ABO_1803 of Alcanivorax borkumensis (strain ATCC 700651 / DSM 11573 / NCIMB 13689 / SK2).